The following is a 481-amino-acid chain: UDP-N-acetylmuramoyl-L-alanyl-D-glutamate--L-lysine ligase (481 aa).

Serine 42 serves as a coordination point for UDP-N-acetyl-alpha-D-muramoyl-L-alanyl-D-glutamate. An ATP-binding site is contributed by 118–124 (GTKGKTT). UDP-N-acetyl-alpha-D-muramoyl-L-alanyl-D-glutamate-binding positions include glutamine 158, 160 to 161 (TT), serine 187, and arginine 195. Lysine 229 carries the N6-carboxylysine modification. The short motif at 404 to 407 (DDPN) is the L-lysine recognition motif element.

The protein belongs to the MurCDEF family. MurE subfamily. Post-translationally, carboxylation is probably crucial for Mg(2+) binding and, consequently, for the gamma-phosphate positioning of ATP.

Its subcellular location is the cytoplasm. It carries out the reaction UDP-N-acetyl-alpha-D-muramoyl-L-alanyl-D-glutamate + L-lysine + ATP = UDP-N-acetyl-alpha-D-muramoyl-L-alanyl-gamma-D-glutamyl-L-lysine + ADP + phosphate + H(+). It functions in the pathway cell wall biogenesis; peptidoglycan biosynthesis. Its function is as follows. Catalyzes the addition of L-lysine to the nucleotide precursor UDP-N-acetylmuramoyl-L-alanyl-D-glutamate (UMAG) in the biosynthesis of bacterial cell-wall peptidoglycan. The chain is UDP-N-acetylmuramoyl-L-alanyl-D-glutamate--L-lysine ligase from Streptococcus pyogenes serotype M4 (strain MGAS10750).